We begin with the raw amino-acid sequence, 133 residues long: ATP synthase epsilon chain, chloroplastic (133 aa).

This sequence belongs to the ATPase epsilon chain family. In terms of assembly, F-type ATPases have 2 components, CF(1) - the catalytic core - and CF(0) - the membrane proton channel. CF(1) has five subunits: alpha(3), beta(3), gamma(1), delta(1), epsilon(1). CF(0) has three main subunits: a, b and c.

It localises to the plastid. Its subcellular location is the chloroplast thylakoid membrane. Produces ATP from ADP in the presence of a proton gradient across the membrane. In Mesostigma viride (Green alga), this protein is ATP synthase epsilon chain, chloroplastic.